The primary structure comprises 172 residues: Ribosome maturation factor RimM (172 aa).

In terms of domain architecture, PRC barrel spans 96–168; sequence EGEFYYHQII…RVDVELMEGL (73 aa).

The protein belongs to the RimM family. As to quaternary structure, binds ribosomal protein uS19.

Its subcellular location is the cytoplasm. An accessory protein needed during the final step in the assembly of 30S ribosomal subunit, possibly for assembly of the head region. Essential for efficient processing of 16S rRNA. May be needed both before and after RbfA during the maturation of 16S rRNA. It has affinity for free ribosomal 30S subunits but not for 70S ribosomes. This chain is Ribosome maturation factor RimM, found in Streptococcus pyogenes serotype M18 (strain MGAS8232).